The chain runs to 524 residues: M-phase inducer phosphatase 1 (524 aa).

Positions 74–84 match the Phosphodegron motif; that stretch reads MGSSESTDSGF. Serine 76 bears the Phosphoserine; by CHEK1 mark. A phosphoserine; by NEK11 mark is found at serine 79, serine 82, and serine 88. The residue at position 107 (serine 107) is a Phosphoserine. Serine 124 is modified (phosphoserine; by CHEK1 and CHEK2). Residues 141 to 143 carry the KEN box motif; sequence KEN. Serine 178 carries the post-translational modification Phosphoserine; by CHEK1. Residues 264–317 form a disordered region; sequence LCSSSTRSVLKRPERSQEESPPGSTKRRKSMSGASPKESTNPEKAHETLHQSLS. Serine 279 and serine 293 each carry phosphoserine; by CHEK1 and CHEK2. Positions 303 to 312 are enriched in basic and acidic residues; that stretch reads TNPEKAHETL. The residue at position 321 (serine 321) is a Phosphoserine. The Rhodanese domain occupies 376–482; the sequence is LIKEFVIIDC…FFMKCQSYCE (107 aa). The active site involves cysteine 431. The residue at position 507 (threonine 507) is a Phosphothreonine; by CHEK1. Phosphoserine; by PLK3 occurs at positions 513 and 519.

It belongs to the MPI phosphatase family. Interacts with CCNB1/cyclin B1. Interacts with YWHAE/14-3-3 epsilon when phosphorylated. Interacts with CUL1 specifically when CUL1 is neddylated and active. Interacts with BTRC/BTRCP1 and FBXW11/BTRCP2. Interactions with CUL1, BTRC and FBXW11 are enhanced upon DNA damage. Interacts with CHEK2; mediates CDC25A phosphorylation and degradation in response to infrared-induced DNA damages. Interacts with HSP90AB1; prevents heat shock-mediated CDC25A degradation and contributes to cell cycle progression. Post-translationally, phosphorylated by CHEK1 on Ser-76, Ser-124, Ser-178, Ser-279, Ser-293 and Thr-507 during checkpoint mediated cell cycle arrest. Also phosphorylated by CHEK2 on Ser-124, Ser-279, and Ser-293 during checkpoint mediated cell cycle arrest. Phosphorylation on Ser-178 and Thr-507 creates binding sites for YWHAE/14-3-3 epsilon which inhibits CDC25A. Phosphorylation on Ser-76, Ser-124, Ser-178, Ser-279 and Ser-293 may also promote ubiquitin-dependent proteolysis of CDC25A by the SCF complex. Phosphorylation of CDC25A at Ser-76 by CHEK1 primes it for subsequent phosphorylation at Ser-79, Ser-82 and Ser-88 by NEK11. Phosphorylation by NEK11 is required for BTRC-mediated polyubiquitination and degradation. Phosphorylation by PIM1 leads to an increase in phosphatase activity. Phosphorylated by PLK3 following DNA damage, leading to promote its ubiquitination and degradation. Ubiquitinated by the anaphase promoting complex/cyclosome (APC/C) ubiquitin ligase complex that contains FZR1/CDH1 during G1 phase leading to its degradation by the proteasome. Ubiquitinated by a SCF complex containing BTRC and FBXW11 during S phase leading to its degradation by the proteasome. Deubiquitination by USP17L2/DUB3 leads to its stabilization.

It catalyses the reaction O-phospho-L-tyrosyl-[protein] + H2O = L-tyrosyl-[protein] + phosphate. With respect to regulation, stimulated by B-type cyclins. Stimulated by PIM1-mediated phosphorylation. Its function is as follows. Tyrosine protein phosphatase which functions as a dosage-dependent inducer of mitotic progression. Directly dephosphorylates CDK1 and stimulates its kinase activity. Also dephosphorylates CDK2 in complex with cyclin-E, in vitro. This Homo sapiens (Human) protein is M-phase inducer phosphatase 1 (CDC25A).